A 686-amino-acid chain; its full sequence is XK-related protein 5 (686 aa).

The next 5 membrane-spanning stretches (helical) occupy residues 33-53, 205-225, 239-259, 265-285, and 297-317; these read LLWG…QALS, HFWV…WLVA, LFNL…WDSP, VTFY…ATDF, and IAGV…YYSL. Disordered stretches follow at residues 339 to 387, 448 to 468, and 490 to 592; these read GDKT…PPEA, ALSA…LENS, and FASD…APFP. Residues 340-359 are compositionally biased toward basic and acidic residues; the sequence is DKTERRDSPRATDLAGKRTE. Composition is skewed to polar residues over residues 450-468 and 490-509; these read SAQQ…LENS and FASD…TQGE. Residues 523-536 show a composition bias toward gly residues; that stretch reads QGKGTGGQQRGGEG. Residues 550–567 are compositionally biased toward polar residues; it reads VATSSQQEGSPATLQTAH.

It belongs to the XK family.

It localises to the cell membrane. The sequence is that of XK-related protein 5 from Homo sapiens (Human).